The sequence spans 552 residues: MTKFVFVTGGVVSSLGKGIASASLAAILESRGLKVTLIKLDPYINVDPGTMSPFQHGEVFVTDDGAETDLDLGHYERFIETRMKQSNNFTTGRIYQSVLEKERRGDYLGKTVQVIPHVTNEIQEYIKRGAGLGTPDAVDVAICEVGGTVGDIESLPFLEAVRQLALKQGPNNTAFVHLTYLPWIATAGELKTKPTQHTVQKLREIGIQPDALLCRAQHQVPEEEKEKISLFTNVPEWGVISMWDVDTIYKVPRMLHEQGLDGLICDKLRLNTPPTNLKRWDDLVHETEHPQGEVKIAMVGKYVELSDAYKSVNEALKHAGMQSHVAVKITHVDSETISDANARDKLSQYDAILVPGGFGSRGVEGKISTARYARENKVPYLGICLGMQVATIEYARHVAGLEGANSTEFDPKSANPVIALITEWKDADGTVKTRDENSDLGGTMRLGAQSSDVQAGTLAHSIYGDVVTERHRHRYEANVQYLDQLREAGLVISALTQREQLTEIVELPKEVHPWYIGVQFHPEFKSTPWSGHPLFNAFVKAAIERQKAPRKP.

An amidoligase domain region spans residues 1–270 (MTKFVFVTGG…DGLICDKLRL (270 aa)). Ser-13 serves as a coordination point for CTP. Ser-13 lines the UTP pocket. ATP-binding positions include 14-19 (SLGKGI) and Asp-71. The Mg(2+) site is built by Asp-71 and Glu-144. CTP is bound by residues 151-153 (DIE), 191-196 (KTKPTQ), and Lys-227. UTP is bound by residues 191–196 (KTKPTQ) and Lys-227. A Glutamine amidotransferase type-1 domain is found at 295–548 (KIAMVGKYVE…VKAAIERQKA (254 aa)). Gly-357 serves as a coordination point for L-glutamine. Cys-384 (nucleophile; for glutamine hydrolysis) is an active-site residue. L-glutamine contacts are provided by residues 385–388 (LGMQ), Glu-408, and Arg-474. Active-site residues include His-521 and Glu-523.

This sequence belongs to the CTP synthase family. In terms of assembly, homotetramer.

The enzyme catalyses UTP + L-glutamine + ATP + H2O = CTP + L-glutamate + ADP + phosphate + 2 H(+). It catalyses the reaction L-glutamine + H2O = L-glutamate + NH4(+). The catalysed reaction is UTP + NH4(+) + ATP = CTP + ADP + phosphate + 2 H(+). Its pathway is pyrimidine metabolism; CTP biosynthesis via de novo pathway; CTP from UDP: step 2/2. Its activity is regulated as follows. Allosterically activated by GTP, when glutamine is the substrate; GTP has no effect on the reaction when ammonia is the substrate. The allosteric effector GTP functions by stabilizing the protein conformation that binds the tetrahedral intermediate(s) formed during glutamine hydrolysis. Inhibited by the product CTP, via allosteric rather than competitive inhibition. Its function is as follows. Catalyzes the ATP-dependent amination of UTP to CTP with either L-glutamine or ammonia as the source of nitrogen. Regulates intracellular CTP levels through interactions with the four ribonucleotide triphosphates. This chain is CTP synthase, found in Delftia acidovorans (strain DSM 14801 / SPH-1).